A 104-amino-acid chain; its full sequence is Large ribosomal subunit protein uL24 (104 aa).

Belongs to the universal ribosomal protein uL24 family. Part of the 50S ribosomal subunit.

Functionally, one of two assembly initiator proteins, it binds directly to the 5'-end of the 23S rRNA, where it nucleates assembly of the 50S subunit. One of the proteins that surrounds the polypeptide exit tunnel on the outside of the subunit. The protein is Large ribosomal subunit protein uL24 of Rhodopseudomonas palustris (strain BisA53).